The following is a 277-amino-acid chain: Putative phosphoenolpyruvate synthase regulatory protein (277 aa).

Glycine 157 to threonine 164 is an ADP binding site.

It belongs to the pyruvate, phosphate/water dikinase regulatory protein family. PSRP subfamily.

It catalyses the reaction [pyruvate, water dikinase] + ADP = [pyruvate, water dikinase]-phosphate + AMP + H(+). It carries out the reaction [pyruvate, water dikinase]-phosphate + phosphate + H(+) = [pyruvate, water dikinase] + diphosphate. In terms of biological role, bifunctional serine/threonine kinase and phosphorylase involved in the regulation of the phosphoenolpyruvate synthase (PEPS) by catalyzing its phosphorylation/dephosphorylation. The sequence is that of Putative phosphoenolpyruvate synthase regulatory protein from Vibrio vulnificus (strain CMCP6).